The chain runs to 303 residues: Caspase-7 (303 aa).

N-acetylmethionine is present on Met1. Residues 1 to 23 constitute a propeptide that is removed on maturation; that stretch reads MTDDQDCAAELEKVDSSSEDGVD. A disordered region spans residues 1–26; it reads MTDDQDCAAELEKVDSSSEDGVDAKP. Over residues 10 to 26 the composition is skewed to basic and acidic residues; it reads ELEKVDSSSEDGVDAKP. Ser30 bears the Phosphoserine mark. The exosite stretch occupies residues 38–41; that stretch reads KKKR. The tract at residues 76-87 is loop L1; that stretch reads KNFDKATGMDVR. Residue His144 is part of the active site. Position 173 is a phosphothreonine (Thr173). Residue Cys186 is part of the active site. Residues 187–196 are loop L2; that stretch reads RGTELDDGIQ. The propeptide occupies 199–206; sequence SGPINDID. The interval 226–238 is loop L3; the sequence is VPGYYSWRNPGKG. Ser239 is modified (phosphoserine). A loop L4 region spans residues 274–288; that stretch reads ESQSDDPRFNEKKQI.

Belongs to the peptidase C14A family. As to quaternary structure, heterotetramer that consists of two anti-parallel arranged heterodimers, each one formed by a 20 kDa (p20) and a 11 kDa (p11) subunit. Interacts with XIAP (via its second BIR domain); inhibiting CASP7 activity. Interacts with BIRC6/bruce. Interacts with ATXN3 (short isoform 1). Interacts with HSPA5. Cleavage by different proteases, such as granzyme B (GZMB), caspase-1 (CASP1), caspase-8 (CASP8) or caspase-9 (CASP9) generate the two active subunits. Its involvement in different programmed cell death processes is probably specified by the protease that activates CASP7. Cleaved and activated by initiator caspases (CASP8 and/or CASP9), leading to execution phase of apoptosis. Cleavage and maturation by GZMB regulates granzyme-mediated programmed cell death. Cleaved and activated by CASP1 in response to bacterial infection. Propeptide domains can also be cleaved efficiently by CASP3. Active heterodimers between the small subunit of caspase-7 and the large subunit of CASP3, and vice versa, also occur. Also cleaved at the N-terminus at alternative sites by CAPN1, leading to its activation. In terms of processing, phosphorylation at Ser-30 and Ser-239 by PAK2 inhibits its activity. Phosphorylation at Ser-30 prevents cleavage and activation by initiator caspase CASP9, while phosphorylation at Ser-239 prevents thiol protease activity by preventing substrate-binding. Post-translationally, ubiquitinated by BIRC6; this activity is inhibited by DIABLO/SMAC. Highly expressed in heart, lung, liver and kidney. Low levels in spleen, skeletal muscle and testis. No expression in the brain.

Its subcellular location is the cytoplasm. The protein resides in the cytosol. It localises to the nucleus. The protein localises to the secreted. It is found in the extracellular space. It carries out the reaction Strict requirement for an Asp residue at position P1 and has a preferred cleavage sequence of Asp-Glu-Val-Asp-|-.. Its activity is regulated as follows. During activation, the N-terminal disordered prodomain is removed by cleavage. Concomitantly, double cleavage gives rise to a large Caspase-7 subunit p20 and a small Caspase-7 subunit p11. The two large and two small subunits then assemble to form the active CASP7 complex. Can be cleaved and activated by different caspases, depending on the context. Cleaved and activated by initiator caspases (CASP8 and/or CASP9), leading to execution phase of apoptosis. Cleavage and maturation by GZMB regulates granzyme-mediated programmed cell death. Cleavage and maturation by CASP1 regulates pyroptosis. Inhibited by XIAP, which directly binds to the active site pocket and obstructs substrate entry. Phosphorylation at Ser-30 and Ser-239 by PAK2 inhibits its activity. Inhibited by BIRC6; following inhibition of BIRC6-caspase binding by DIABLO/SMAC, BIRC6 is subjected to caspase cleavage, leading to an increase in active caspases. Its function is as follows. Thiol protease involved in different programmed cell death processes, such as apoptosis, pyroptosis or granzyme-mediated programmed cell death, by proteolytically cleaving target proteins. Has a marked preference for Asp-Glu-Val-Asp (DEVD) consensus sequences, with some plasticity for alternate non-canonical sequences. Its involvement in the different programmed cell death processes is probably determined by upstream proteases that activate CASP7. Acts as an effector caspase involved in the execution phase of apoptosis: following cleavage and activation by initiator caspases (CASP8 and/or CASP9), mediates execution of apoptosis by catalyzing cleavage of proteins, such as CLSPN, PARP1, PTGES3 and YY1. Compared to CASP3, acts as a minor executioner caspase and cleaves a limited set of target proteins. Acts as a key regulator of the inflammatory response in response to bacterial infection by catalyzing cleavage and activation of the sphingomyelin phosphodiesterase SMPD1 in the extracellular milieu, thereby promoting membrane repair. Regulates pyroptosis in intestinal epithelial cells: cleaved and activated by CASP1 in response to S.typhimurium infection, promoting its secretion to the extracellular milieu, where it catalyzes activation of SMPD1, generating ceramides that repair membranes and counteract the action of gasdermin-D (GSDMD) pores. Regulates granzyme-mediated programmed cell death in hepatocytes: cleaved and activated by granzyme B (GZMB) in response to bacterial infection, promoting its secretion to the extracellular milieu, where it catalyzes activation of SMPD1, generating ceramides that repair membranes and counteract the action of perforin (PRF1) pores. Following cleavage by CASP1 in response to inflammasome activation, catalyzes processing and inactivation of PARP1, alleviating the transcription repressor activity of PARP1. Acts as an inhibitor of type I interferon production during virus-induced apoptosis by mediating cleavage of antiviral proteins CGAS, IRF3 and MAVS, thereby preventing cytokine overproduction. Cleaves and activates sterol regulatory element binding proteins (SREBPs). Cleaves phospholipid scramblase proteins XKR4, XKR8 and XKR9. Cleaves BIRC6 following inhibition of BIRC6-caspase binding by DIABLO/SMAC. The chain is Caspase-7 from Mus musculus (Mouse).